Here is a 252-residue protein sequence, read N- to C-terminus: Probable oligoribonuclease (252 aa).

An Exonuclease domain is found at 81–241; that stretch reads VWIDCEMTGL…ALSDILESIG (161 aa). Y202 is an active-site residue.

This sequence belongs to the oligoribonuclease family.

The protein localises to the cytoplasm. It localises to the nucleus. 3'-to-5' exoribonuclease specific for small oligoribonucleotides. This chain is Probable oligoribonuclease (rex2), found in Schizosaccharomyces pombe (strain 972 / ATCC 24843) (Fission yeast).